The chain runs to 67 residues: Large ribosomal subunit protein bL35 (67 aa).

Belongs to the bacterial ribosomal protein bL35 family.

The chain is Large ribosomal subunit protein bL35 from Picosynechococcus sp. (strain ATCC 27264 / PCC 7002 / PR-6) (Agmenellum quadruplicatum).